The sequence spans 489 residues: Probable guanine deaminase (489 aa).

Zn(2+) is bound by residues His-100 and His-102. Substrate contacts are provided by residues 102–105 (HVSQ), 231–232 (RF), 258–261 (HLSE), and Asp-348. Residues His-258 and Asp-348 each coordinate Zn(2+).

The protein belongs to the metallo-dependent hydrolases superfamily. ATZ/TRZ family. Requires Zn(2+) as cofactor.

It localises to the cytoplasm. The catalysed reaction is guanine + H2O + H(+) = xanthine + NH4(+). Its pathway is purine metabolism; guanine degradation; xanthine from guanine: step 1/1. Catalyzes the hydrolytic deamination of guanine, producing xanthine and ammonia. This Saccharomyces cerevisiae (strain ATCC 204508 / S288c) (Baker's yeast) protein is Probable guanine deaminase (GUD1).